Consider the following 614-residue polypeptide: Zinc finger protein 276 (614 aa).

Residues 1–46 (MKRDRLGRFLSPGIARQRGGSGGGCGSGRTRGRPSRSGGTSADGAA) are disordered. A compositionally biased stretch (gly residues) spans 19–29 (GGSGGGCGSGR). Residues 78–164 (GHCRLCHGKF…LQRVNVSPAG (87 aa)) form the ZAD domain. Residues cysteine 80, cysteine 83, cysteine 137, and cysteine 140 each contribute to the Zn(2+) site. The segment at 271–422 (RLAQNSESNP…PGPKPGWKKK (152 aa)) is disordered. Composition is skewed to polar residues over residues 272-282 (LAQNSESNPTG) and 291-302 (RETQVGSETKTL). Residues 357–369 (SDLSEGDFLSEDE) show a composition bias toward acidic residues. The span at 386 to 408 (YPEKKVSGKKSEGREAKRPEEPK) shows a compositional bias: basic and acidic residues. The span at 409–422 (IRKKPGPKPGWKKK) shows a compositional bias: basic residues. 5 consecutive C2H2-type zinc fingers follow at residues 434 to 458 (YKCP…IKEH), 465 to 490 (RPCP…KLIH), 496 to 518 (YICD…QMRH), 524 to 546 (LQCE…MTKH), and 554 to 577 (FACD…SMVH). The tract at residues 588-614 (PLEAEPPPGPLSPSGTMEGQAVKPEPT) is disordered.

As to expression, found in all the examined tissues, with highest levels in kidney, liver, lung, and spleen.

The protein resides in the nucleus. The protein localises to the chromosome. It localises to the centromere. Its subcellular location is the kinetochore. May be involved in transcriptional regulation. The protein is Zinc finger protein 276 (Znf276) of Mus musculus (Mouse).